The chain runs to 135 residues: uncharacterized protein (135 aa).

The protein belongs to the asp23 family.

This is an uncharacterized protein from Bacillus subtilis (strain 168).